A 216-amino-acid polypeptide reads, in one-letter code: MRVSGSASSQDIISRINSKNINNNDSNEVKRIKDALCIESKERILYPQNLSRDNLKQMARYVNNTYVHYSGNCVLLSACLHYNIHHRQDILSSKNTASPTVGLDSAIVDKIIFGHELNQSYCLNSIDEVEKEILNRYDIKRESSFIISAENYIAPIIGECRHDFNAVVICEYDKKPYVQFIDSWKTSNILPSLQEIKKHFSSSGEFYVRAYDEKHD.

Belongs to the SpvD family.

Part of a Salmonella virulence gene cluster. In Salmonella dublin, this protein is Virulence protein SpvD (spvD).